The sequence spans 156 residues: Large ribosomal subunit protein uL22 (156 aa).

This sequence belongs to the universal ribosomal protein uL22 family. In terms of assembly, part of the 50S ribosomal subunit.

In terms of biological role, this protein binds specifically to 23S rRNA. It makes multiple contacts with different domains of the 23S rRNA in the assembled 50S subunit and ribosome. Its function is as follows. The globular domain of the protein is located near the polypeptide exit tunnel on the outside of the subunit, while an extended beta-hairpin is found that lines the wall of the exit tunnel in the center of the 70S ribosome. The protein is Large ribosomal subunit protein uL22 of Halobacterium salinarum (strain ATCC 700922 / JCM 11081 / NRC-1) (Halobacterium halobium).